The sequence spans 523 residues: Protein tweety homolog 3 (523 aa).

Topologically, residues 1-42 (MAGVSYAAPWWVSLLHRLPHFDLSWEATSSQFRPEDTDYQQA) are extracellular. The chain crosses the membrane as a helical span at residues 43–63 (LLLLGAAALACLALDLLFLLF). At 64 to 86 (YSFWLCCRRRKSEEHLDADCCCT) the chain is on the cytoplasmic side. The chain crosses the membrane as a helical span at residues 87–107 (AWCVIIATLVCSAGIAVGFYG). The Extracellular segment spans residues 108–211 (NGETSDGIHR…VDLYDWYRWL (104 aa)). Ca(2+)-binding residues include Glu-110 and Asp-113. N-linked (GlcNAc...) asparagine glycans are attached at residues Asn-126 and Asn-144. The helical transmembrane segment at 212-232 (GYLGLLLLDVIICLLVLVGLI) threads the bilayer. Residues 233–236 (RSSK) lie on the Cytoplasmic side of the membrane. A helical transmembrane segment spans residues 237–257 (GILVGVCLLGVLALVISWGAL). Topologically, residues 258-386 (GLELAVSVGS…LTGFCYDGVE (129 aa)) are extracellular. 2 disulfide bridges follow: Cys-271–Cys-381 and Cys-299–Cys-366. Asn-351 is a glycosylation site (N-linked (GlcNAc...) asparagine). Residues 387–407 (GLIYLALFSFVTALMFSSIVC) traverse the membrane as a helical segment. Topologically, residues 408–523 (SVPHTWQQKR…QPRPDSSGSH (116 aa)) are cytoplasmic. Disordered regions lie at residues 413–435 (WQQK…RQAH) and 482–523 (QNPR…SGSH). Ser-496 carries the phosphoserine modification. Residues 498 to 501 (PPSY) carry the PY-motif; mediates interaction with NEDD4L motif. The span at 501 to 523 (YTSSMRAKYLATSQPRPDSSGSH) shows a compositional bias: polar residues. Phosphoserine occurs at positions 504 and 522.

It belongs to the tweety family. In terms of assembly, homotetramer; disulfide-linked. Homodimer. Interacts with NEDD4L. Post-translationally, ubiquitinated by NEDD4L. In terms of processing, N-Glycosylated. Contains high-mannose, hybrid and complex oligosaccharides. In terms of tissue distribution, expressed in excitable tissues. Expressed in the brain, heart, skeletal muscle, colon, spleen, kidney and peripheral blood leukocytes.

The protein localises to the cell membrane. It catalyses the reaction chloride(in) = chloride(out). The catalysed reaction is L-glutamate(out) = L-glutamate(in). Functionally, calcium-independent, swelling-dependent volume-regulated anion channel (VRAC-swell) which plays a pivotal role in the process of regulatory volume decrease (RVD) in the brain through the efflux of anions like chloride and organic osmolytes like glutamate. Probable large-conductance Ca(2+)-activated chloride channel. In Homo sapiens (Human), this protein is Protein tweety homolog 3 (TTYH3).